A 78-amino-acid polypeptide reads, in one-letter code: Broad mercury transporter MerE (78 aa).

2 consecutive transmembrane segments (helical) span residues 19-39 (LWGA…AAVL) and 47-67 (FLGE…VLAV).

The protein localises to the cell inner membrane. Functionally, broad mercury transporter that mediates the transport of both CH(3)Hg(I) and Hg(II) across the membrane. This chain is Broad mercury transporter MerE, found in Shigella flexneri.